The chain runs to 93 residues: Neurophysin 1 (93 aa).

Disulfide bonds link C10–C54, C13–C27, C21–C44, C28–C34, C61–C74, C68–C86, and C75–C80.

It belongs to the vasopressin/oxytocin family.

Its subcellular location is the secreted. Functionally, neurophysin 1 specifically binds oxytocin. The chain is Neurophysin 1 from Anser anser anser (Western greylag goose).